We begin with the raw amino-acid sequence, 101 residues long: Urease subunit beta (101 aa).

Belongs to the urease beta subunit family. As to quaternary structure, heterotrimer of UreA (gamma), UreB (beta) and UreC (alpha) subunits. Three heterotrimers associate to form the active enzyme.

The protein localises to the cytoplasm. It carries out the reaction urea + 2 H2O + H(+) = hydrogencarbonate + 2 NH4(+). It functions in the pathway nitrogen metabolism; urea degradation; CO(2) and NH(3) from urea (urease route): step 1/1. The polypeptide is Urease subunit beta (Ralstonia nicotianae (strain ATCC BAA-1114 / GMI1000) (Ralstonia solanacearum)).